A 354-amino-acid polypeptide reads, in one-letter code: Macrosialin (354 aa).

A signal peptide spans 1–21; it reads MRLAVLFSGALLGLLAAQGTG. The Extracellular portion of the chain corresponds to 22-319; that stretch reads NDCPHKKSAT…QSFSCPSDRS (298 aa). The mucin-like stretch occupies residues 23 to 140; the sequence is DCPHKKSATL…SPGFTSSAHP (118 aa). A compositionally biased stretch (low complexity) spans 40 to 51; that stretch reads PTVTESTGTTSH. Positions 40 to 162 are disordered; sequence PTVTESTGTT…SKETIGDYTW (123 aa). The span at 52-61 shows a compositional bias: basic residues; sequence RTTKSHKTTT. The segment covering 62–84 has biased composition (low complexity); the sequence is HRTTTTGTTSHGPTTATHNPTTT. Repeat copies occupy residues 70–99 and 100–129. The 2 X 30 AA tandem repeats stretch occupies residues 70-129; the sequence is TSHGPTTATHNPTTTSHGNVTVHPTSNSTATSQGPSTATHSPATTSHGNATVHPTSNSTA. The span at 85–102 shows a compositional bias: polar residues; the sequence is SHGNVTVHPTSNSTATSQ. N-linked (GlcNAc...) asparagine glycosylation is found at N88 and N96. Over residues 103-117 the composition is skewed to low complexity; that stretch reads GPSTATHSPATTSHG. N118 and N126 each carry an N-linked (GlcNAc...) asparagine glycan. A compositionally biased stretch (polar residues) spans 121 to 135; the sequence is VHPTSNSTATSPGFT. Residues 140-150 show a composition bias toward pro residues; the sequence is PEPPPPSPSPS. Residues N164, N199, N246, N261, and N279 are each glycosylated (N-linked (GlcNAc...) asparagine). A disulfide bond links C169 and C207. A disulfide bridge links C277 with C314. The helical transmembrane segment at 320–344 threads the bilayer; that stretch reads ILLPLIIGLILLGLLALVLIAFCII. The Cytoplasmic portion of the chain corresponds to 345–354; it reads RRRPSAYQAL.

This sequence belongs to the LAMP family. In terms of processing, N- and O-glycosylated. As to expression, highly expressed by blood monocytes and tissue macrophages. Also expressed in lymphocytes, fibroblasts and endothelial cells. Expressed in many tumor cell lines which could allow them to attach to selectins on vascular endothelium, facilitating their dissemination to secondary sites.

It is found in the cell membrane. The protein resides in the endosome membrane. It localises to the lysosome membrane. In terms of biological role, could play a role in phagocytic activities of tissue macrophages, both in intracellular lysosomal metabolism and extracellular cell-cell and cell-pathogen interactions. Binds to tissue- and organ-specific lectins or selectins, allowing homing of macrophage subsets to particular sites. Rapid recirculation of CD68 from endosomes and lysosomes to the plasma membrane may allow macrophages to crawl over selectin-bearing substrates or other cells. The sequence is that of Macrosialin (CD68) from Homo sapiens (Human).